The following is a 65-amino-acid chain: Weak toxin CM-13b (65 aa).

Intrachain disulfides connect cysteine 3–cysteine 24, cysteine 6–cysteine 11, cysteine 17–cysteine 42, cysteine 46–cysteine 57, and cysteine 58–cysteine 63.

This sequence belongs to the three-finger toxin family. Ancestral subfamily. Orphan group II sub-subfamily. As to expression, expressed by the venom gland.

The protein localises to the secreted. Binds with low affinity to muscular (alpha-1-beta-1-delta-epsilon/CHRNA1-CHRNB1-CHRND-CHRNE) and very low affinity to neuronal (alpha-7/CHRNA7) nicotinic acetylcholine receptor (nAChR). The chain is Weak toxin CM-13b from Naja annulifera (Banded Egyptian cobra).